The following is a 356-amino-acid chain: Phosphate acyltransferase (356 aa).

Belongs to the PlsX family. As to quaternary structure, homodimer. Probably interacts with PlsY.

The protein localises to the cytoplasm. The catalysed reaction is a fatty acyl-[ACP] + phosphate = an acyl phosphate + holo-[ACP]. Its pathway is lipid metabolism; phospholipid metabolism. In terms of biological role, catalyzes the reversible formation of acyl-phosphate (acyl-PO(4)) from acyl-[acyl-carrier-protein] (acyl-ACP). This enzyme utilizes acyl-ACP as fatty acyl donor, but not acyl-CoA. This chain is Phosphate acyltransferase, found in Shigella flexneri serotype 5b (strain 8401).